A 261-amino-acid polypeptide reads, in one-letter code: Phosphoinositide-3-kinase-interacting protein 1 (261 aa).

Residues 1–21 (MLLAWVRTILVSNMLLAEAYG) form the signal peptide. At 22-166 (SGGCFWDNGH…NSKEKKDLGT (145 aa)) the chain is on the extracellular side. The Kringle domain occupies 24-101 (GCFWDNGHLY…EKRPCQDLRC (78 aa)). Cystine bridges form between Cys-25/Cys-101, Cys-46/Cys-82, and Cys-70/Cys-96. Residues 90–101 (APEKRPCQDLRC) show a composition bias toward basic and acidic residues. The interval 90–122 (APEKRPCQDLRCPDTTSQGLPTSATETEEAAEV) is disordered. A helical membrane pass occupies residues 167 to 187 (LGYVLGITMMVIIVVIGAGIV). The Cytoplasmic segment spans residues 188 to 261 (LGYTYKRGKD…LMGQAGTPGA (74 aa)).

It is found in the cell membrane. Its function is as follows. Negative regulator of hepatic phosphatidylinositol 3-kinase (PI3K) activity. In Bos taurus (Bovine), this protein is Phosphoinositide-3-kinase-interacting protein 1 (PIK3IP1).